Consider the following 999-residue polypeptide: Ulvan lyase, long isoform (999 aa).

An N-terminal signal peptide occupies residues 1–21; sequence MKCLKTLLVSTTLLGAFSLNA. 126 to 127 contacts substrate; sequence SH. H127 (proton donor/acceptor) is an active-site residue. D189, D199, and K201 together coordinate Ca(2+). Substrate contacts are provided by Y280 and R297. Positions 300, 303, and 305 each coordinate Ca(2+). Y361 serves as a coordination point for substrate.

This sequence belongs to the polysaccharide lyase 24 family.

Ulvan lyase involved in ulvan degradation. Ulvan is the main polysaccharide component of the Ulvales (green seaweed) cell wall. It is composed of disaccharide building blocks comprising 3-sulfated rhamnose (Rha3S) linked to D-glucuronic acid (GlcA), L-iduronic acid (IduA), or D-xylose (Xyl). Ulvan lyase catalyzes preferentially the endolytic cleavage of the glycosidic bond between Rha3S and the uronic acid GlcA, but not IduA, producing oligosaccharides that have unsaturated 4-deoxy-L-threo-hex-4-enopyranosiduronic acid (deltaUA) at the non-reducing end. The most abundant end products in the degradation of the ulvan polysaccharide were deltaUA-Rha3S disaccharides and deltaUA-Rha3S-IduA-Rha3S and deltaUA-Rha3S-Xyl-Rha3S tetrasaccharides. This is Ulvan lyase, long isoform from Alteromonas sp.